The sequence spans 343 residues: Methionine import ATP-binding protein MetN (343 aa).

The ABC transporter domain occupies 2 to 241; the sequence is IKLSNITKVF…PKTPLAQKFI (240 aa). 38–45 is an ATP binding site; that stretch reads GASGAGKS.

It belongs to the ABC transporter superfamily. Methionine importer (TC 3.A.1.24) family. The complex is composed of two ATP-binding proteins (MetN), two transmembrane proteins (MetI) and a solute-binding protein (MetQ).

It localises to the cell inner membrane. It carries out the reaction L-methionine(out) + ATP + H2O = L-methionine(in) + ADP + phosphate + H(+). It catalyses the reaction D-methionine(out) + ATP + H2O = D-methionine(in) + ADP + phosphate + H(+). Its function is as follows. Part of the ABC transporter complex MetNIQ involved in methionine import. Responsible for energy coupling to the transport system. This Escherichia coli O157:H7 protein is Methionine import ATP-binding protein MetN.